A 270-amino-acid polypeptide reads, in one-letter code: Acyl-[acyl-carrier-protein]--UDP-N-acetylglucosamine O-acyltransferase (270 aa).

It belongs to the transferase hexapeptide repeat family. LpxA subfamily. In terms of assembly, homotrimer.

The protein localises to the cytoplasm. The catalysed reaction is a (3R)-hydroxyacyl-[ACP] + UDP-N-acetyl-alpha-D-glucosamine = a UDP-3-O-[(3R)-3-hydroxyacyl]-N-acetyl-alpha-D-glucosamine + holo-[ACP]. It participates in glycolipid biosynthesis; lipid IV(A) biosynthesis; lipid IV(A) from (3R)-3-hydroxytetradecanoyl-[acyl-carrier-protein] and UDP-N-acetyl-alpha-D-glucosamine: step 1/6. In terms of biological role, involved in the biosynthesis of lipid A, a phosphorylated glycolipid that anchors the lipopolysaccharide to the outer membrane of the cell. This is Acyl-[acyl-carrier-protein]--UDP-N-acetylglucosamine O-acyltransferase from Sinorhizobium medicae (strain WSM419) (Ensifer medicae).